We begin with the raw amino-acid sequence, 153 residues long: NADH dehydrogenase [ubiquinone] 1 beta subcomplex subunit 11, mitochondrial (153 aa).

The transit peptide at 1–29 (MAAGLFGLSARLLLAAAATRGLPAARVRW) directs the protein to the mitochondrion. The tract at residues 40-77 (PSAVAGKRPPEPTTQWQEDPEPEDENLYEKNPDSHGYD) is disordered. Positions 66 to 77 (LYEKNPDSHGYD) are enriched in basic and acidic residues. The chain crosses the membrane as a helical span at residues 89-109 (LVFFFGVSIILVLGSTFVAYL).

Belongs to the complex I NDUFB11 subunit family. As to quaternary structure, complex I is composed of 45 different subunits. Interacts with BCAP31.

Its subcellular location is the mitochondrion inner membrane. Functionally, accessory subunit of the mitochondrial membrane respiratory chain NADH dehydrogenase (Complex I), that is believed not to be involved in catalysis. Complex I functions in the transfer of electrons from NADH to the respiratory chain. The immediate electron acceptor for the enzyme is believed to be ubiquinone. The sequence is that of NADH dehydrogenase [ubiquinone] 1 beta subcomplex subunit 11, mitochondrial (NDUFB11) from Pan troglodytes (Chimpanzee).